Here is a 301-residue protein sequence, read N- to C-terminus: Probable deoxyhypusine synthase 1 (301 aa).

Lysine 269 serves as the catalytic Nucleophile.

The protein belongs to the deoxyhypusine synthase family. It depends on NAD(+) as a cofactor.

The catalysed reaction is [eIF5A protein]-L-lysine + spermidine = [eIF5A protein]-deoxyhypusine + propane-1,3-diamine. Its pathway is protein modification; eIF5A hypusination. In terms of biological role, catalyzes the NAD-dependent oxidative cleavage of spermidine and the subsequent transfer of the butylamine moiety of spermidine to the epsilon-amino group of a specific lysine residue of the eIF-5A precursor protein to form the intermediate deoxyhypusine residue. This chain is Probable deoxyhypusine synthase 1 (dys1), found in Archaeoglobus fulgidus (strain ATCC 49558 / DSM 4304 / JCM 9628 / NBRC 100126 / VC-16).